The chain runs to 261 residues: uncharacterized protein (261 aa).

Residues 1–20 (MKIQVMLIIIFVGIFTICLA) form the signal peptide. N-linked (GlcNAc...) asparagine; by host glycosylation is found at N22 and N27.

Its subcellular location is the secreted. This is an uncharacterized protein from Acanthamoeba polyphaga (Amoeba).